The sequence spans 312 residues: Olfactory receptor-like protein COR4 (312 aa).

At 1-26 (MASGNCTTPTTFILSGLTDNPGLQMP) the chain is on the extracellular side. Asparagine 5 carries N-linked (GlcNAc...) asparagine glycosylation. Residues 27-49 (LFMVFLAIYTITLLTNLGLIALI) form a helical membrane-spanning segment. At 50–57 (SVDLHLQT) the chain is on the cytoplasmic side. Residues 58-79 (PMYIFLQNLSFTDAAYSTVITP) traverse the membrane as a helical segment. Over 80 to 100 (KMLATFLEERKTISYIGCILQ) the chain is Extracellular. Cysteine 97 and cysteine 179 form a disulfide bridge. The helical transmembrane segment at 101-120 (YFSFVLLTVTESLLLAVMAY) threads the bilayer. Residues 121 to 139 (DRYVAICKPLLYPSIMTKA) lie on the Cytoplasmic side of the membrane. A helical transmembrane segment spans residues 140 to 164 (VCWRLVKGLYSLAFLNSLVHTSGLL). The Extracellular segment spans residues 165 to 205 (KLSFCSSNVVNHFFCDNSPLFQISSSSTTLNELLVFIFGSL). Residues 206–226 (FAMSSIITILISYVFIILTVV) traverse the membrane as a helical segment. At 227–239 (RIRSKDGKYKAFS) the chain is on the cytoplasmic side. A helical membrane pass occupies residues 240–260 (TCTSHLMAVSLFHGTVIFMYL). At 261–271 (RPVKLFSLDTD) the chain is on the extracellular side. The chain crosses the membrane as a helical span at residues 272-292 (KIASLFYTVVIPMLNPLIYSW). Over 293 to 312 (RNKEVKDALRRVIATNVWIH) the chain is Cytoplasmic.

Belongs to the G-protein coupled receptor 1 family.

It localises to the cell membrane. Its function is as follows. Odorant receptor. This Gallus gallus (Chicken) protein is Olfactory receptor-like protein COR4 (COR4).